The chain runs to 689 residues: Glycine--tRNA ligase beta subunit (689 aa).

The protein belongs to the class-II aminoacyl-tRNA synthetase family. Tetramer of two alpha and two beta subunits.

The protein localises to the cytoplasm. The enzyme catalyses tRNA(Gly) + glycine + ATP = glycyl-tRNA(Gly) + AMP + diphosphate. This is Glycine--tRNA ligase beta subunit from Lacticaseibacillus casei (strain BL23) (Lactobacillus casei).